Reading from the N-terminus, the 319-residue chain is Oligopeptide transport ATP-binding protein OppF (319 aa).

The ABC transporter domain maps to 5-255 (LNLKDLKVYY…PQHIYTKRLL (251 aa)). 48-55 (GESGSGKS) lines the ATP pocket.

This sequence belongs to the ABC transporter superfamily. As to quaternary structure, the complex is composed of two ATP-binding proteins (OppD and OppF), two transmembrane proteins (OppB and OppC) and a solute-binding protein (OppA).

It localises to the cell membrane. The enzyme catalyses a [peptide](out) + ATP + H2O = a [peptide](in) + ADP + phosphate + H(+). Its function is as follows. Part of the ABC transporter complex OppABCDF involved in the uptake of oligopeptides. Probably responsible for energy coupling to the transport system. Essential for uptake of peptides larger than three amino acids and for growth in milk. The protein is Oligopeptide transport ATP-binding protein OppF (oppF) of Lactococcus lactis subsp. lactis (strain IL1403) (Streptococcus lactis).